We begin with the raw amino-acid sequence, 325 residues long: Cytochrome f (325 aa).

Positions 1–40 are cleaved as a signal peptide; that stretch reads MKTPELMAIWQRLKTACLVAIATFGLFFASDVLFPQAAAA. Heme contacts are provided by Y41, C62, C65, and H66. Residues 290–309 traverse the membrane as a helical segment; sequence IYGYMAFVAGIMLTQIFLVL.

This sequence belongs to the cytochrome f family. In terms of assembly, the 4 large subunits of the cytochrome b6-f complex are cytochrome b6, subunit IV (17 kDa polypeptide, PetD), cytochrome f and the Rieske protein, while the 4 small subunits are PetG, PetL, PetM and PetN. The complex functions as a dimer. Requires heme as cofactor.

It is found in the cellular thylakoid membrane. Component of the cytochrome b6-f complex, which mediates electron transfer between photosystem II (PSII) and photosystem I (PSI), cyclic electron flow around PSI, and state transitions. The chain is Cytochrome f (petA) from Picosynechococcus sp. (strain ATCC 27264 / PCC 7002 / PR-6) (Agmenellum quadruplicatum).